The chain runs to 316 residues: 4-hydroxy-3-methylbut-2-enyl diphosphate reductase (316 aa).

Cysteine 12 contributes to the [4Fe-4S] cluster binding site. The (2E)-4-hydroxy-3-methylbut-2-enyl diphosphate site is built by histidine 41 and histidine 74. Dimethylallyl diphosphate contacts are provided by histidine 41 and histidine 74. 2 residues coordinate isopentenyl diphosphate: histidine 41 and histidine 74. [4Fe-4S] cluster is bound at residue cysteine 96. A (2E)-4-hydroxy-3-methylbut-2-enyl diphosphate-binding site is contributed by histidine 124. Histidine 124 provides a ligand contact to dimethylallyl diphosphate. Histidine 124 serves as a coordination point for isopentenyl diphosphate. Glutamate 126 (proton donor) is an active-site residue. Threonine 167 contacts (2E)-4-hydroxy-3-methylbut-2-enyl diphosphate. Cysteine 197 provides a ligand contact to [4Fe-4S] cluster. Residues serine 225, serine 226, asparagine 227, and serine 269 each coordinate (2E)-4-hydroxy-3-methylbut-2-enyl diphosphate. Serine 225, serine 226, asparagine 227, and serine 269 together coordinate dimethylallyl diphosphate. Residues serine 225, serine 226, asparagine 227, and serine 269 each coordinate isopentenyl diphosphate.

This sequence belongs to the IspH family. In terms of assembly, homodimer. [4Fe-4S] cluster serves as cofactor.

The enzyme catalyses isopentenyl diphosphate + 2 oxidized [2Fe-2S]-[ferredoxin] + H2O = (2E)-4-hydroxy-3-methylbut-2-enyl diphosphate + 2 reduced [2Fe-2S]-[ferredoxin] + 2 H(+). It carries out the reaction dimethylallyl diphosphate + 2 oxidized [2Fe-2S]-[ferredoxin] + H2O = (2E)-4-hydroxy-3-methylbut-2-enyl diphosphate + 2 reduced [2Fe-2S]-[ferredoxin] + 2 H(+). It functions in the pathway isoprenoid biosynthesis; dimethylallyl diphosphate biosynthesis; dimethylallyl diphosphate from (2E)-4-hydroxy-3-methylbutenyl diphosphate: step 1/1. It participates in isoprenoid biosynthesis; isopentenyl diphosphate biosynthesis via DXP pathway; isopentenyl diphosphate from 1-deoxy-D-xylulose 5-phosphate: step 6/6. Functionally, catalyzes the conversion of 1-hydroxy-2-methyl-2-(E)-butenyl 4-diphosphate (HMBPP) into a mixture of isopentenyl diphosphate (IPP) and dimethylallyl diphosphate (DMAPP). Acts in the terminal step of the DOXP/MEP pathway for isoprenoid precursor biosynthesis. This chain is 4-hydroxy-3-methylbut-2-enyl diphosphate reductase, found in Escherichia coli (strain UTI89 / UPEC).